The following is a 367-amino-acid chain: MATILTLAGDGIGPEIMTQAIDVLNAVNDKFALGLTLESGLIGGVAVDSTGEPLPEETLQRARAADAVLLGAVGGPKWDGIERSKRPERGLLKIRSELGLFANLRVAKLYPQLVNASSIKPEIISGLDLLIVRELTGGIYFGEPRGIRTLENGEQQGYNTMVYSTSEINRIGKVAFELAQTRAQAAGTAAKVCSIDKANVLEVTELWKQTMIELQQSEYSDVALSHMYADNACMQLIKDPKQFDVMVTGNLFGDILSDEAAMLTGSIGMLPSASLDEAGKGMYEPCHGSAPDIAGQDIANPLATILSVSMMLRYTFKQEAAAQAIEQAVSDVLDDGLRTVDILDRNEAGLIQVGCQQMGQAVLAKLI.

Residue 75–88 (GPKWDGIERSKRPE) coordinates NAD(+). Residues Arg-95, Arg-105, Arg-133, and Asp-230 each contribute to the substrate site. Residues Asp-230, Asp-254, and Asp-258 each coordinate Mg(2+). 288–300 (GSAPDIAGQDIAN) contributes to the NAD(+) binding site.

Belongs to the isocitrate and isopropylmalate dehydrogenases family. LeuB type 1 subfamily. Homodimer. Mg(2+) is required as a cofactor. Requires Mn(2+) as cofactor.

The protein localises to the cytoplasm. It catalyses the reaction (2R,3S)-3-isopropylmalate + NAD(+) = 4-methyl-2-oxopentanoate + CO2 + NADH. The protein operates within amino-acid biosynthesis; L-leucine biosynthesis; L-leucine from 3-methyl-2-oxobutanoate: step 3/4. Functionally, catalyzes the oxidation of 3-carboxy-2-hydroxy-4-methylpentanoate (3-isopropylmalate) to 3-carboxy-4-methyl-2-oxopentanoate. The product decarboxylates to 4-methyl-2 oxopentanoate. The polypeptide is 3-isopropylmalate dehydrogenase (Psychrobacter cryohalolentis (strain ATCC BAA-1226 / DSM 17306 / VKM B-2378 / K5)).